Here is a 30-residue protein sequence, read N- to C-terminus: Cyclotide hyen-D (30 aa).

A cross-link (cyclopeptide (Gly-Asn)) is located at residues 1–30; that stretch reads GFPCGESCVYIPCFTAAIGCSCKSKVCYKN. Cystine bridges form between Cys4–Cys20, Cys8–Cys22, and Cys13–Cys27.

In terms of processing, this is a cyclic peptide. Detected in stems (at protein level).

Its function is as follows. Probably participates in a plant defense mechanism. Has strong cytotoxic activity against HUVEC cells (LC(50)= 0.58 uM) and various cancer cells including HeLa (LC(50)= 0.48 uM), MCF-7 and K562. Also displays some hemolytic activity. Binds to and induces leakage in phospholipd membranes, particularly ones containing 1-palmitoyl-2-oleophosphatidylethanolamine (POPE). The chain is Cyclotide hyen-D from Pigea enneasperma (Spade flower).